The primary structure comprises 388 residues: Probable pectin lyase F-1 (388 aa).

A signal peptide spans M1–A19. Residues C80 and C103 are joined by a disulfide bond. The N-linked (GlcNAc...) asparagine glycan is linked to N126. The active site involves R253. C328 and C336 are disulfide-bonded.

Belongs to the polysaccharide lyase 1 family.

It localises to the secreted. It catalyses the reaction Eliminative cleavage of (1-&gt;4)-alpha-D-galacturonan methyl ester to give oligosaccharides with 4-deoxy-6-O-methyl-alpha-D-galact-4-enuronosyl groups at their non-reducing ends.. Pectinolytic enzymes consist of four classes of enzymes: pectin lyase, polygalacturonase, pectin methylesterase and rhamnogalacturonase. Among pectinolytic enzymes, pectin lyase is the most important in depolymerization of pectin, since it cleaves internal glycosidic bonds of highly methylated pectins. In Aspergillus terreus (strain NIH 2624 / FGSC A1156), this protein is Probable pectin lyase F-1 (pelF-1).